The sequence spans 364 residues: Acetylserotonin O-methyltransferase 1 (364 aa).

S-adenosyl-L-homocysteine contacts are provided by Gly208, Asp231, Asp251, and Lys265. Residue His269 is the Proton acceptor of the active site. Residues Glu300 and Glu330 contribute to the active site.

The protein belongs to the class I-like SAM-binding methyltransferase superfamily. Cation-independent O-methyltransferase family. In terms of assembly, homodimer. As to expression, expressed in leaves, stems and flowers.

The protein localises to the cytoplasm. The catalysed reaction is N-acetylserotonin + S-adenosyl-L-methionine = melatonin + S-adenosyl-L-homocysteine + H(+). It functions in the pathway aromatic compound metabolism; melatonin biosynthesis; melatonin from serotonin: step 1/2. Methyltransferase which catalyzes the transfer of a methyl group onto N-acetylserotonin, producing melatonin (N-acetyl-5-methoxytryptamine). The chain is Acetylserotonin O-methyltransferase 1 from Oryza sativa subsp. japonica (Rice).